The chain runs to 1183 residues: M-phase phosphoprotein 9 (1183 aa).

Disordered stretches follow at residues G28–T52, K300–D334, and I472–Q495. A compositionally biased stretch (basic and acidic residues) spans Q324–D334. A required for its centrosomal localization region spans residues T401–E800. Residues K451–T500 are interaction with CEP97. Positions S483–Q495 are enriched in low complexity. Positions D609–S804 form a coiled coil. Position 781 is a phosphoserine; by TTBK2 (S781). K784 participates in a covalent cross-link: Glycyl lysine isopeptide (Lys-Gly) (interchain with G-Cter in ubiquitin). Phosphoserine; by TTBK2 is present on S788. The interaction with KIF24 stretch occupies residues N801–P1031. Disordered stretches follow at residues L863–P894 and N910–H999. A compositionally biased stretch (polar residues) spans S921–R936. Residues L949 to S967 show a composition bias toward low complexity. Residue S994 is modified to Phosphoserine. The stretch at R1109 to F1174 forms a coiled coil.

Interacts with CCP110, CEP97 and KIF24. TTBK2-mediated phosphorylation at Ser-781 and Ser-788, promotes its ubiquitination at Lys-784 leading to proteasomal degradation, loss of MPHOSPH9 facilitates the removal of the CP110-CEP97 complex from the mother centrioles, promoting the initiation of ciliogenesis. Phosphorylated in M (mitotic) phase. In terms of processing, ubiquitinated at Lys-784, leading to proteasomal degradation.

It is found in the cytoplasm. It localises to the cytoskeleton. The protein resides in the microtubule organizing center. Its subcellular location is the centrosome. The protein localises to the centriole. It is found in the golgi apparatus membrane. Negatively regulates cilia formation by recruiting the CP110-CEP97 complex (a negative regulator of ciliogenesis) at the distal end of the mother centriole in ciliary cells. At the beginning of cilia formation, MPHOSPH9 undergoes TTBK2-mediated phosphorylation and degradation via the ubiquitin-proteasome system and removes itself and the CP110-CEP97 complex from the distal end of the mother centriole, which subsequently promotes cilia formation. This chain is M-phase phosphoprotein 9 (MPHOSPH9), found in Homo sapiens (Human).